Consider the following 149-residue polypeptide: uncharacterized protein (149 aa).

The helical transmembrane segment at 124-144 (IIIIALIIILANYAPSIIGKI) threads the bilayer.

The protein belongs to the M.jannaschii MJ0023/MJ0349/MJ1072/MJ1074/MJ1107/MJECL16 family.

The protein localises to the membrane. This is an uncharacterized protein from Methanocaldococcus jannaschii (strain ATCC 43067 / DSM 2661 / JAL-1 / JCM 10045 / NBRC 100440) (Methanococcus jannaschii).